The sequence spans 360 residues: DNA replication and repair protein RecF (360 aa).

30 to 37 (GANGSGKT) serves as a coordination point for ATP.

This sequence belongs to the RecF family.

It localises to the cytoplasm. The RecF protein is involved in DNA metabolism; it is required for DNA replication and normal SOS inducibility. RecF binds preferentially to single-stranded, linear DNA. It also seems to bind ATP. This is DNA replication and repair protein RecF from Acinetobacter baumannii (strain ATCC 17978 / DSM 105126 / CIP 53.77 / LMG 1025 / NCDC KC755 / 5377).